A 114-amino-acid chain; its full sequence is Protein S100-A9 (114 aa).

T2 is modified (blocked amino end (Thr)). C3 bears the S-nitrosocysteine; transient mark. 2 consecutive EF-hand domains span residues 12-47 and 54-89; these read IETI…DLQN and KNEK…LTWA. Zn(2+) is bound at residue H20. Ca(2+) is bound by residues S23, L26, and H28. D30 contacts Zn(2+). Ca(2+) is bound by residues T31, E36, D67, N69, D71, Q73, and E78. Zn(2+) contacts are provided by H91 and H95. The span at 93 to 102 shows a compositional bias: basic and acidic residues; the sequence is KMHEGDEGPG. Residues 93–114 are disordered; it reads KMHEGDEGPGHHHKPGLGEGTP. Position 105 is a pros-methylhistidine (H105). Position 113 is a phosphothreonine; by MAPK14 (T113).

Homodimer. Preferentially exists as a heterodimer or heterotetramer with S100A8 known as calprotectin (S100A8/A9). S100A9 interacts with ATP2A2. S100A9 interacts with AGER, and with the heterodimeric complex formed by TLR4 and LY96 in the presence of calcium and/or zinc ions. S100A9 binds quinoline-3-carboxamides in the presence of calcium and/or zinc ions. S100A9 interacts with amyloid-beta protein 40. Calprotectin (S100A8/9) interacts with CEACAM3 and tubulin filaments in a calcium-dependent manner. Heterotetrameric calprotectin (S100A8/A9) interacts with ANXA6 and associates with tubulin filaments in activated monocytes. Calprotectin (S100A8/9) interacts with NCF2/P67PHOX, RAC1, RAC2, CYBA and CYBB. Calprotectin (S100A8/9) interacts with NOS2 to form the iNOS-S100A8/A9 transnitrosylase complex; induced by LDL(ox). Calprotectin (S100A8/9) interacts with CD69. Phosphorylated. Phosphorylation inhibits activation of tubulin polymerization. Post-translationally, S-nitrosylation of Cys-3 is implicated in LDL(ox)-induced S-nitrosylation of GAPDH at 'Cys-247' through a transnitrosylase mechanism involving a iNOS-S100A8/9 complex. In terms of processing, methylation at His-105 by METTL9 reduces zinc-binding without affecting heterodimerization with S100A8. Calprotectin (S100A8/9) is predominantly expressed in myeloid cells. Except for inflammatory conditions, the expression is restricted to a specific stage of myeloid differentiation since both proteins are expressed in circulating neutrophils and monocytes but are absent in normal tissue macrophages and lymphocytes. Under chronic inflammatory conditions, such as psoriasis and malignant disorders, also expressed in the epidermis. Found in high concentrations at local sites of inflammation or in the serum of patients with inflammatory diseases such as rheumatoid, cystic fibrosis, inflammatory bowel disease, Crohn's disease, giant cell arteritis, cystic fibrosis, Sjogren's syndrome, systemic lupus erythematosus, and progressive systemic sclerosis. Involved in the formation and deposition of amyloids in the aging prostate known as corpora amylacea inclusions. Strongly up-regulated in many tumors, including gastric, esophageal, colon, pancreatic, bladder, ovarian, thyroid, breast and skin cancers.

It is found in the secreted. The protein localises to the cytoplasm. It localises to the cytoskeleton. Its subcellular location is the cell membrane. S100A9 is a calcium- and zinc-binding protein which plays a prominent role in the regulation of inflammatory processes and immune response. It can induce neutrophil chemotaxis, adhesion, can increase the bactericidal activity of neutrophils by promoting phagocytosis via activation of SYK, PI3K/AKT, and ERK1/2 and can induce degranulation of neutrophils by a MAPK-dependent mechanism. Predominantly found as calprotectin (S100A8/A9) which has a wide plethora of intra- and extracellular functions. The intracellular functions include: facilitating leukocyte arachidonic acid trafficking and metabolism, modulation of the tubulin-dependent cytoskeleton during migration of phagocytes and activation of the neutrophilic NADPH-oxidase. Also participates in regulatory T-cell differentiation together with CD69. Activates NADPH-oxidase by facilitating the enzyme complex assembly at the cell membrane, transferring arachidonic acid, an essential cofactor, to the enzyme complex and S100A8 contributes to the enzyme assembly by directly binding to NCF2/P67PHOX. The extracellular functions involve pro-inflammatory, antimicrobial, oxidant-scavenging and apoptosis-inducing activities. Its pro-inflammatory activity includes recruitment of leukocytes, promotion of cytokine and chemokine production, and regulation of leukocyte adhesion and migration. Acts as an alarmin or a danger associated molecular pattern (DAMP) molecule and stimulates innate immune cells via binding to pattern recognition receptors such as Toll-like receptor 4 (TLR4) and receptor for advanced glycation endproducts (AGER). Binding to TLR4 and AGER activates the MAP-kinase and NF-kappa-B signaling pathways resulting in the amplification of the pro-inflammatory cascade. Has antimicrobial activity towards bacteria and fungi and exerts its antimicrobial activity probably via chelation of Zn(2+) which is essential for microbial growth. Can induce cell death via autophagy and apoptosis and this occurs through the cross-talk of mitochondria and lysosomes via reactive oxygen species (ROS) and the process involves BNIP3. Can regulate neutrophil number and apoptosis by an anti-apoptotic effect; regulates cell survival via ITGAM/ITGB and TLR4 and a signaling mechanism involving MEK-ERK. Its role as an oxidant scavenger has a protective role in preventing exaggerated tissue damage by scavenging oxidants. Can act as a potent amplifier of inflammation in autoimmunity as well as in cancer development and tumor spread. Has transnitrosylase activity; in oxidatively-modified low-densitity lipoprotein (LDL(ox))-induced S-nitrosylation of GAPDH on 'Cys-247' proposed to transfer the NO moiety from NOS2/iNOS to GAPDH via its own S-nitrosylated Cys-3. The iNOS-S100A8/A9 transnitrosylase complex is proposed to also direct selective inflammatory stimulus-dependent S-nitrosylation of multiple targets such as ANXA5, EZR, MSN and VIM by recognizing a [IL]-x-C-x-x-[DE] motif. In Homo sapiens (Human), this protein is Protein S100-A9.